A 202-amino-acid polypeptide reads, in one-letter code: Protein DEHYDRATION-INDUCED 19 homolog 5 (202 aa).

Basic residues predominate over residues 88-97; the sequence is SHLLKRRKPS. Residues 88 to 120 form a disordered region; sequence SHLLKRRKPSRPSSSWPTPSNNSDPYFEGPPQY. Positions 98-112 are enriched in low complexity; sequence RPSSSWPTPSNNSDP.

It belongs to the Di19 family.

The protein is Protein DEHYDRATION-INDUCED 19 homolog 5 (DI19-5) of Oryza sativa subsp. japonica (Rice).